Consider the following 506-residue polypeptide: Histidine ammonia-lyase (506 aa).

Positions 143 to 145 form a cross-link, 5-imidazolinone (Ala-Gly); sequence ASG. Position 144 is a 2,3-didehydroalanine (Ser) (Ser144).

It belongs to the PAL/histidase family. In terms of processing, contains an active site 4-methylidene-imidazol-5-one (MIO), which is formed autocatalytically by cyclization and dehydration of residues Ala-Ser-Gly.

The protein localises to the cytoplasm. The enzyme catalyses L-histidine = trans-urocanate + NH4(+). It functions in the pathway amino-acid degradation; L-histidine degradation into L-glutamate; N-formimidoyl-L-glutamate from L-histidine: step 1/3. This is Histidine ammonia-lyase from Salmonella schwarzengrund (strain CVM19633).